The chain runs to 149 residues: NPC intracellular cholesterol transporter 2 (149 aa).

Positions 1 to 21 (MRLLVAAFLLLALGDLGPGGA) are cleaved as a signal peptide. Intrachain disulfides connect Cys-27–Cys-140, Cys-42–Cys-47, and Cys-93–Cys-99. N-linked (GlcNAc...) asparagine glycosylation occurs at Asn-58. At Lys-116 the chain carries N6-acetyllysine.

This sequence belongs to the NPC2 family. Interacts with NPC1 (via the second lumenal domain) in a cholestrol-dependent manner. Interacts with NUS1/NgBR, the interaction stabilizes NCP2 and regulates cholesterol trafficking. Interacts with DHDDS. Interacts with NEDD4L (via C2 domain). Interacts with NPC1L1. Epididymis. High levels are found in the caput and corpus regions. Weaker levels in the distal cauda and in the efferent ducts.

It localises to the secreted. It is found in the endoplasmic reticulum. The protein localises to the lysosome. It carries out the reaction cholesterol(in) = cholesterol(out). In terms of biological role, intracellular cholesterol transporter which acts in concert with NPC1 and plays an important role in the egress of cholesterol from the lysosomal compartment. Unesterified cholesterol that has been released from LDLs in the lumen of the late endosomes/lysosomes is transferred by NPC2 to the cholesterol-binding pocket in the N-terminal domain of NPC1. May bind and mobilize cholesterol that is associated with membranes. NPC2 binds cholesterol with a 1:1 stoichiometry. Can bind a variety of sterols, including lathosterol, desmosterol and the plant sterols stigmasterol and beta-sitosterol. The secreted form of NCP2 regulates biliary cholesterol secretion via stimulation of ABCG5/ABCG8-mediated cholesterol transport. This Canis lupus familiaris (Dog) protein is NPC intracellular cholesterol transporter 2.